The following is a 431-amino-acid chain: MATIEAVGAREILDSRGNPTVEVEVLLDDGTFARAAVPSGASTGAYEANERRDGDKGRYGGKGVEQAVEAVIEEVGPALVGHDAHEQRIIDRVMLDLDGTPTKSRLGANAILGVSLAVAKAAASAADLPLFRYLGGPNAHVLPVPMMNIVNGGAHADTGVAIQEFMIAPVGAASFREALRWGAETYHALKSVLKQRGLATGLGDEGGFAPDLPSNKDALDLIVEAIGKTGFAVGSDIALALDVAATEFHGADGYDFEGSKRSAEWMTGYYEGLVSEYPLVSIEDPLSEDDWDGWQHITNALGGKLQLVGDDLFVTNPERLQKGIDLSAGNSMLVKVNQIGSLTETLDAVDLAHRNGFSTMMSHRSGETEDTTIADLAVAVGSGQIKTGAPARSERVAKYNQLLRIEEELDDAAVYAGAKAFPRSAGFTGRA.

Position 163 (Q163) interacts with (2R)-2-phosphoglycerate. The Proton donor role is filled by E205. D242, E283, and D310 together coordinate Mg(2+). (2R)-2-phosphoglycerate is bound by residues K335, R364, S365, and K386. K335 functions as the Proton acceptor in the catalytic mechanism.

It belongs to the enolase family. Mg(2+) serves as cofactor.

It is found in the cytoplasm. The protein resides in the secreted. Its subcellular location is the cell surface. The catalysed reaction is (2R)-2-phosphoglycerate = phosphoenolpyruvate + H2O. It functions in the pathway carbohydrate degradation; glycolysis; pyruvate from D-glyceraldehyde 3-phosphate: step 4/5. Its function is as follows. Catalyzes the reversible conversion of 2-phosphoglycerate (2-PG) into phosphoenolpyruvate (PEP). It is essential for the degradation of carbohydrates via glycolysis. This chain is Enolase, found in Kineococcus radiotolerans (strain ATCC BAA-149 / DSM 14245 / SRS30216).